Here is an 82-residue protein sequence, read N- to C-terminus: Large ribosomal subunit protein bL31B (82 aa).

The protein belongs to the bacterial ribosomal protein bL31 family. Type B subfamily. In terms of assembly, part of the 50S ribosomal subunit.

In Pectobacterium atrosepticum (strain SCRI 1043 / ATCC BAA-672) (Erwinia carotovora subsp. atroseptica), this protein is Large ribosomal subunit protein bL31B.